We begin with the raw amino-acid sequence, 314 residues long: ATP synthase gamma chain (314 aa).

The protein belongs to the ATPase gamma chain family. In terms of assembly, F-type ATPases have 2 components, CF(1) - the catalytic core - and CF(0) - the membrane proton channel. CF(1) has five subunits: alpha(3), beta(3), gamma(1), delta(1), epsilon(1). CF(0) has three main subunits: a, b and c.

It localises to the cell membrane. In terms of biological role, produces ATP from ADP in the presence of a proton gradient across the membrane. The gamma chain is believed to be important in regulating ATPase activity and the flow of protons through the CF(0) complex. The sequence is that of ATP synthase gamma chain from Limosilactobacillus reuteri (strain DSM 20016) (Lactobacillus reuteri).